We begin with the raw amino-acid sequence, 383 residues long: Protein delta homolog 1 (383 aa).

Positions 1 to 23 (MIATGALLRVLLLLLAFGHSTYG) are cleaved as a signal peptide. EGF-like domains follow at residues 24–55 (AECDPACDPQHGFCEADNVCRCEPGWEGPLCE), 59–86 (TSPGCVNGLCEEPWQCVCKEGWDGKFCE), 88–125 (DIRACTSTPCANNGTCVDLEKGQYECSCTPGFSGKDCQ), 127–168 (KAGP…NFCE), 170–206 (VTNSCTPNPCENDGVCTDIGGDFRCRCPAGFVDKTCS), and 208–245 (PVSNCASGPCLNGGTCLQHTQVSFECLCKPPFMGPTCA). Topologically, residues 24 to 306 (AECDPACDPQ…PLLTEGQAIC (283 aa)) are extracellular. Disulfide bonds link Cys-26–Cys-37, Cys-30–Cys-43, Cys-45–Cys-54, Cys-63–Cys-68, Cys-76–Cys-85, Cys-92–Cys-103, Cys-97–Cys-113, Cys-115–Cys-124, Cys-131–Cys-144, Cys-138–Cys-156, Cys-158–Cys-167, Cys-174–Cys-185, Cys-179–Cys-194, Cys-196–Cys-205, Cys-212–Cys-223, Cys-217–Cys-233, and Cys-235–Cys-244. The helical transmembrane segment at 307–327 (FTILGVLTSLVVLGTVAIVFL) threads the bilayer. Residues 328–383 (NKCEAWVSNLRYNHMLRKKKNLLLQYNSGEELAVNIIFPEKIDMTTFNKEAGDEDI) lie on the Cytoplasmic side of the membrane.

As to quaternary structure, monomer. Interacts with SH3RF2. Post-translationally, glycosylated. In terms of tissue distribution, pancreas and adrenal glands (at protein level).

It localises to the membrane. The protein localises to the cytoplasm. May have a role in neuroendocrine differentiation. Inhibits adipocyte differentiation. The protein is Protein delta homolog 1 (Dlk1) of Rattus norvegicus (Rat).